A 233-amino-acid chain; its full sequence is LexA repressor (233 aa).

A DNA-binding region (H-T-H motif) is located at residues 26 to 46; that stretch reads FDEMKDALDLRSKSGIHRLIT. Residues S154 and K192 each act as for autocatalytic cleavage activity in the active site.

It belongs to the peptidase S24 family. Homodimer.

The enzyme catalyses Hydrolysis of Ala-|-Gly bond in repressor LexA.. Represses a number of genes involved in the response to DNA damage (SOS response), including recA and lexA. In the presence of single-stranded DNA, RecA interacts with LexA causing an autocatalytic cleavage which disrupts the DNA-binding part of LexA, leading to derepression of the SOS regulon and eventually DNA repair. The sequence is that of LexA repressor from Nitrobacter winogradskyi (strain ATCC 25391 / DSM 10237 / CIP 104748 / NCIMB 11846 / Nb-255).